The chain runs to 625 residues: 1-deoxy-D-xylulose-5-phosphate synthase (625 aa).

Thiamine diphosphate-binding positions include His-74 and 115-117 (GHS). Asp-146 lines the Mg(2+) pocket. Residues 147 to 148 (GA), Asn-175, Tyr-286, and Glu-367 contribute to the thiamine diphosphate site. Mg(2+) is bound at residue Asn-175.

Belongs to the transketolase family. DXPS subfamily. As to quaternary structure, homodimer. Mg(2+) serves as cofactor. Thiamine diphosphate is required as a cofactor.

The catalysed reaction is D-glyceraldehyde 3-phosphate + pyruvate + H(+) = 1-deoxy-D-xylulose 5-phosphate + CO2. It functions in the pathway metabolic intermediate biosynthesis; 1-deoxy-D-xylulose 5-phosphate biosynthesis; 1-deoxy-D-xylulose 5-phosphate from D-glyceraldehyde 3-phosphate and pyruvate: step 1/1. Catalyzes the acyloin condensation reaction between C atoms 2 and 3 of pyruvate and glyceraldehyde 3-phosphate to yield 1-deoxy-D-xylulose-5-phosphate (DXP). The polypeptide is 1-deoxy-D-xylulose-5-phosphate synthase (Lachnoclostridium phytofermentans (strain ATCC 700394 / DSM 18823 / ISDg) (Clostridium phytofermentans)).